The chain runs to 684 residues: DNA gyrase subunit B, novobiocin-sensitive (684 aa).

Positions 1-22 (MADSGNPNENTPSVATGENGEV) are disordered. A novobiocin-binding region spans residues 154 to 302 (VKTDGYRWTQ…RMLSVEIAMQ (149 aa)). A Toprim domain is found at 463-577 (CEIFIVEGDS…AGHVYLSRPP (115 aa)). Glu469, Asp542, and Asp544 together coordinate Mg(2+).

It belongs to the type II topoisomerase GyrB family. In terms of assembly, heterotetramer, composed of two GyrA and two GyrB chains. In the heterotetramer, GyrA contains the active site tyrosine that forms a transient covalent intermediate with DNA, while GyrB binds cofactors and catalyzes ATP hydrolysis. The cofactor is Mg(2+). Mn(2+) is required as a cofactor. Requires Ca(2+) as cofactor.

The protein localises to the cytoplasm. The enzyme catalyses ATP-dependent breakage, passage and rejoining of double-stranded DNA.. Functionally, a type II topoisomerase that negatively supercoils closed circular double-stranded (ds) DNA in an ATP-dependent manner to modulate DNA topology and maintain chromosomes in an underwound state. Negative supercoiling favors strand separation, and DNA replication, transcription, recombination and repair, all of which involve strand separation. Also able to catalyze the interconversion of other topological isomers of dsDNA rings, including catenanes and knotted rings. Type II topoisomerases break and join 2 DNA strands simultaneously in an ATP-dependent manner. In Streptomyces niveus (Streptomyces spheroides), this protein is DNA gyrase subunit B, novobiocin-sensitive.